The sequence spans 512 residues: MGEYQLHQSRNLSVNQTLDEILGISRKSETTTTSSGSSGAEKNALNSPIRPPTRHGRESSGSNEENKDPIQLENGNGSTLSFLTSSSSATSSTAARRNSDDDFIKKLNDIRRRSLISTMDATSTPTTSVPIHFDSPRRESRPCLEIHVEESPEELSTHAVEITEFHRDLSENSLGTSTDHEDPSLTFRVDKELEQSESKKTTKRPASGVKKTLKASISIDAPKPKPRPRPQTSANLSTKTIKDKDQEMMQMSMFGSKLNKPSDAHHKEWLQKKEREIREKKAKEKAAAEQKAATEKERRENSAKLYQRWVQDHDKKAKELKSKKTQQERKKSENEKTTQDQKLKEAEKNYEMWKRERSKSVTDIRKKLEQEEDKKRKKEEEAKNEKIKEAQAAFLAWKRKKEELLNEEAEKLKKEQVQKQLEESEKMTRLSLANEAYETWIELKESEREFIADFVLIEAPPIPWLPPSNLIPRQFVRSSNGNRLRARSQSAKSIAKRSRSRPGTTTSLRPFR.

Disordered regions lie at residues 24-103 (ISRK…DDDF), 168-386 (DLSE…KNEK), and 481-512 (GNRL…RPFR). 2 stretches are compositionally biased toward low complexity: residues 30 to 39 (TTTTSSGSSG) and 78 to 95 (STLS…STAA). The span at 178–200 (TDHEDPSLTFRVDKELEQSESKK) shows a compositional bias: basic and acidic residues. The segment covering 230–239 (PQTSANLSTK) has biased composition (polar residues). 2 stretches are compositionally biased toward basic and acidic residues: residues 260–302 (KPSD…RENS) and 310–386 (VQDH…KNEK). The stretch at 267–429 (KEWLQKKERE…QLEESEKMTR (163 aa)) forms a coiled coil. Polar residues predominate over residues 502-512 (PGTTTSLRPFR).

In terms of tissue distribution, expressed in amphid and phasmid ciliated neurons.

The protein localises to the cell projection. The protein resides in the cilium. It localises to the cytoplasm. It is found in the cytoskeleton. Its subcellular location is the cilium axoneme. This is Protein maph-9 from Caenorhabditis elegans.